The following is a 926-amino-acid chain: Protein translocase subunit SecA (926 aa).

ATP is bound by residues Q87, 105–109, and D512; that span reads GEGKT. 4 residues coordinate Zn(2+): C911, C913, C922, and H923.

The protein belongs to the SecA family. In terms of assembly, monomer and homodimer. Part of the essential Sec protein translocation apparatus which comprises SecA, SecYEG and auxiliary proteins SecDF-YajC and YidC. Zn(2+) serves as cofactor.

It is found in the cell inner membrane. The protein resides in the cytoplasm. The enzyme catalyses ATP + H2O + cellular proteinSide 1 = ADP + phosphate + cellular proteinSide 2.. In terms of biological role, part of the Sec protein translocase complex. Interacts with the SecYEG preprotein conducting channel. Has a central role in coupling the hydrolysis of ATP to the transfer of proteins into and across the cell membrane, serving both as a receptor for the preprotein-SecB complex and as an ATP-driven molecular motor driving the stepwise translocation of polypeptide chains across the membrane. This Psychrobacter cryohalolentis (strain ATCC BAA-1226 / DSM 17306 / VKM B-2378 / K5) protein is Protein translocase subunit SecA.